Reading from the N-terminus, the 201-residue chain is Coat protein (201 aa).

Belongs to the potexvirus capsid protein family.

The protein resides in the virion. Functionally, required for genome encapsidation. Forms ribonucleoprotein complexes along with TGB1 helicase and viral RNA. This chain is Coat protein, found in Lilium formosanum.